A 162-amino-acid chain; its full sequence is Putative 4-hydroxy-4-methyl-2-oxoglutarate aldolase (162 aa).

Substrate-binding positions include 75-78 (GDML) and arginine 97. Position 98 (aspartate 98) interacts with a divalent metal cation.

It belongs to the class II aldolase/RraA-like family. Homotrimer. A divalent metal cation serves as cofactor.

It carries out the reaction 4-hydroxy-4-methyl-2-oxoglutarate = 2 pyruvate. It catalyses the reaction oxaloacetate + H(+) = pyruvate + CO2. Catalyzes the aldol cleavage of 4-hydroxy-4-methyl-2-oxoglutarate (HMG) into 2 molecules of pyruvate. Also contains a secondary oxaloacetate (OAA) decarboxylase activity due to the common pyruvate enolate transition state formed following C-C bond cleavage in the retro-aldol and decarboxylation reactions. This chain is Putative 4-hydroxy-4-methyl-2-oxoglutarate aldolase, found in Azotobacter vinelandii (strain DJ / ATCC BAA-1303).